Reading from the N-terminus, the 415-residue chain is F-box protein At3g13820 (415 aa).

The 50-residue stretch at 1–50 (MTTMSNLPAEVLEEILSRTPVTSLRTMRSTCKKWNNLSKKKIIPEAARKQ) folds into the F-box domain. Disordered stretches follow at residues 209–229 (NDYD…EDDD) and 387–415 (KQPK…KIIG). The span at 210–229 (DYDDQEDEEEEDDEEYEDDD) shows a compositional bias: acidic residues. A compositionally biased stretch (basic residues) spans 403–415 (NKNKKGRKIKIIG).

The chain is F-box protein At3g13820 from Arabidopsis thaliana (Mouse-ear cress).